The following is a 222-amino-acid chain: Triosephosphate isomerase (222 aa).

Position 9–11 (9–11) interacts with substrate; that stretch reads NYK. The active-site Electrophile is the H93. Catalysis depends on E141, which acts as the Proton acceptor. Residues I146, G181, and 202 to 203 contribute to the substrate site; that span reads AS.

Belongs to the triosephosphate isomerase family. Homotetramer; dimer of dimers.

The protein resides in the cytoplasm. It carries out the reaction D-glyceraldehyde 3-phosphate = dihydroxyacetone phosphate. It participates in carbohydrate biosynthesis; gluconeogenesis. The protein operates within carbohydrate degradation; glycolysis; D-glyceraldehyde 3-phosphate from glycerone phosphate: step 1/1. Functionally, involved in the gluconeogenesis. Catalyzes stereospecifically the conversion of dihydroxyacetone phosphate (DHAP) to D-glyceraldehyde-3-phosphate (G3P). This chain is Triosephosphate isomerase, found in Methanosarcina mazei (strain ATCC BAA-159 / DSM 3647 / Goe1 / Go1 / JCM 11833 / OCM 88) (Methanosarcina frisia).